The following is a 426-amino-acid chain: 6-Hydroxy-7-prenyldeoxybrevianamide E synthase notC (426 aa).

Residue Glu94 coordinates substrate. Residues Arg105, Lys191, and Tyr193 each coordinate dimethylallyl diphosphate. Tyr195 contributes to the substrate binding site. Residues Lys267, Tyr269, Gln352, Tyr354, Tyr418, and Tyr422 each coordinate dimethylallyl diphosphate.

Belongs to the tryptophan dimethylallyltransferase family.

The catalysed reaction is 6-hydroxydeoxybrevianamide E + dimethylallyl diphosphate = notoamide S + diphosphate. The protein operates within alkaloid biosynthesis. Its activity is regulated as follows. Addition of 5 mM Mg(2+), Ca(2+) or Mn(2+) slightly enhances catalysis (about 100-120%). Significant reduction of enzyme activity (2%-35%) is observed with Cu(2+), Zn(2+), Fe(2+), or Sn(2+) (5 mM). In terms of biological role, prenyltransferase; part of the gene cluster that mediates the biosynthesis of notoamide, a fungal indole alkaloid that belongs to a family of natural products containing a characteristic bicyclo[2.2.2]diazaoctane core. The first step of notoamide biosynthesis involves coupling of L-proline and L-tryptophan by the bimodular NRPS notE, to produce cyclo-L-tryptophan-L-proline called brevianamide F. The reverse prenyltransferase notF then acts as a deoxybrevianamide E synthase and converts brevianamide F to deoxybrevianamide E via reverse prenylation at C-2 of the indole ring leading to the bicyclo[2.2.2]diazaoctane core. Deoxybrevianamide E is further hydroxylated at C-6 of the indole ring, likely catalyzed by the cytochrome P450 monooxygenase notG, to yield 6-hydroxy-deoxybrevianamide E. 6-hydroxy-deoxybrevianamide E is a specific substrate of the prenyltransferase notC for normal prenylation at C-7 to produce 6-hydroxy-7-prenyl-deoxybrevianamide, also called notoamide S. As the proposed pivotal branching point in notoamide biosynthesis, notoamide S can be diverted to notoamide E through an oxidative pyran ring closure putatively catalyzed by either notH cytochrome P450 monooxygenase or the notD FAD-linked oxidoreductase. This step would be followed by an indole 2,3-epoxidation-initiated pinacol-like rearrangement catalyzed by the notB FAD-dependent monooxygenase leading to the formation of notoamide C and notoamide D. On the other hand notoamide S is converted to notoamide T by notH (or notD), a bifunctional oxidase that also functions as the intramolecular Diels-Alderase responsible for generation of (+)-notoamide T. To generate antipodal (-)-notoaminide T, notH' (or notD') in Aspergillus versicolor is expected to catalyze a Diels-Alder reaction leading to the opposite stereochemistry. The remaining oxidoreductase notD (or notH) likely catalyzes the oxidative pyran ring formation to yield (+)-stephacidin A. The FAD-dependent monooxygenase notI is highly similar to notB and is predicted to catalyze a similar conversion from (+)-stephacidin A to (-)-notoamide B via the 2,3-epoxidation of (+)-stephacidin A followed by a pinacol-type rearrangement. Finally, it remains unclear which enzyme could be responsible for the final hydroxylation steps leading to notoamide A and sclerotiamide. In Aspergillus sp. (strain MF297-2), this protein is 6-Hydroxy-7-prenyldeoxybrevianamide E synthase notC.